The chain runs to 308 residues: Olfactory receptor 2T7 (308 aa).

Residues 1–17 (MPTLSFWVCSATPVSPG) are Extracellular-facing. The helical transmembrane segment at 18–40 (FFALILLVFVTSIASNVVKIILI) threads the bilayer. Over 41 to 51 (HIDSRLHTPMY) the chain is Cytoplasmic. Residues 52 to 74 (FLLSQLSLRDILYISTIVPKMLV) traverse the membrane as a helical segment. Over 75–88 (DQVMSQRAISFAGC) the chain is Extracellular. Cys88 and Cys170 are oxidised to a cystine. A helical transmembrane segment spans residues 89–109 (TAQHFLYLTLAGAEFFLLGLM). The Cytoplasmic segment spans residues 110–130 (SCDRYVAICNPLHYPDLMSRK). A helical membrane pass occupies residues 131 to 151 (ICWLIVAAAWLGGSIDGFLLT). The Extracellular segment spans residues 152–188 (PVTMQFPFCASREINHFFCEVPALLKLSCTDTSAYET). A helical membrane pass occupies residues 189-209 (AMYVCCIMMLLIPFSVISGSY). The Cytoplasmic portion of the chain corresponds to 210 to 235 (TRILITVYRMSEAEGRRKAVATCSSH). A helical transmembrane segment spans residues 236 to 256 (MVVVSLFYGAAMYTYVLPHSY). Residues 257 to 262 (HTPEQD) are Extracellular-facing. A helical membrane pass occupies residues 263 to 283 (KAVSAFYTILTPMLNPLIYSL). The Cytoplasmic segment spans residues 284–308 (RNKDVTGALQKVVGRCVSSGKVTTF).

This sequence belongs to the G-protein coupled receptor 1 family.

Its subcellular location is the cell membrane. Its function is as follows. Odorant receptor. The sequence is that of Olfactory receptor 2T7 (OR2T7) from Homo sapiens (Human).